A 280-amino-acid polypeptide reads, in one-letter code: Putative pyruvate, phosphate dikinase regulatory protein (280 aa).

153 to 160 (GISRTSKT) is a binding site for ADP.

The protein belongs to the pyruvate, phosphate/water dikinase regulatory protein family. PDRP subfamily.

The catalysed reaction is N(tele)-phospho-L-histidyl/L-threonyl-[pyruvate, phosphate dikinase] + ADP = N(tele)-phospho-L-histidyl/O-phospho-L-threonyl-[pyruvate, phosphate dikinase] + AMP + H(+). It catalyses the reaction N(tele)-phospho-L-histidyl/O-phospho-L-threonyl-[pyruvate, phosphate dikinase] + phosphate + H(+) = N(tele)-phospho-L-histidyl/L-threonyl-[pyruvate, phosphate dikinase] + diphosphate. Its function is as follows. Bifunctional serine/threonine kinase and phosphorylase involved in the regulation of the pyruvate, phosphate dikinase (PPDK) by catalyzing its phosphorylation/dephosphorylation. This chain is Putative pyruvate, phosphate dikinase regulatory protein, found in Bartonella quintana (strain Toulouse) (Rochalimaea quintana).